The chain runs to 889 residues: Cytoplasmic aconitate hydratase (889 aa).

Substrate contacts are provided by residues glutamine 86 and 205 to 207; that span reads DSH. Cysteine 437, cysteine 503, and cysteine 506 together coordinate [4Fe-4S] cluster. Substrate contacts are provided by residues arginine 536, arginine 541, arginine 699, and 779-780; that span reads SR.

The protein belongs to the aconitase/IPM isomerase family. In terms of assembly, interacts (when associated with the 4Fe-4S) with FBXL5. Interacts with frataxin(81-210). Requires [4Fe-4S] cluster as cofactor.

Its subcellular location is the cytoplasm. It localises to the cytosol. The enzyme catalyses citrate = D-threo-isocitrate. Functionally, bifunctional iron sensor that switches between 2 activities depending on iron availability. Iron deprivation, promotes its mRNA binding activity through which it regulates the expression of genes involved in iron uptake, sequestration and utilization. Binds to iron-responsive elements (IRES) in the untranslated region of target mRNAs preventing for instance the translation of ferritin and aminolevulinic acid synthase and stabilizing the transferrin receptor mRNA. In terms of biological role, conversely, when cellular iron levels are high, binds a 4Fe-4S cluster which precludes RNA binding activity and promotes the aconitase activity, the isomerization of citrate to isocitrate via cis-aconitate. The chain is Cytoplasmic aconitate hydratase (ACO1) from Bos taurus (Bovine).